The sequence spans 297 residues: Acetyl-coenzyme A carboxylase carboxyl transferase subunit beta (297 aa).

Residues 25 to 294 (LWVKCPETGQ…VPPKGRLPAP (270 aa)) form the CoA carboxyltransferase N-terminal domain.

It belongs to the AccD/PCCB family. In terms of assembly, acetyl-CoA carboxylase is a heterohexamer composed of biotin carboxyl carrier protein (AccB), biotin carboxylase (AccC) and two subunits each of ACCase subunit alpha (AccA) and ACCase subunit beta (AccD).

It is found in the cytoplasm. It catalyses the reaction N(6)-carboxybiotinyl-L-lysyl-[protein] + acetyl-CoA = N(6)-biotinyl-L-lysyl-[protein] + malonyl-CoA. It functions in the pathway lipid metabolism; malonyl-CoA biosynthesis; malonyl-CoA from acetyl-CoA: step 1/1. Functionally, component of the acetyl coenzyme A carboxylase (ACC) complex. Biotin carboxylase (BC) catalyzes the carboxylation of biotin on its carrier protein (BCCP) and then the CO(2) group is transferred by the transcarboxylase to acetyl-CoA to form malonyl-CoA. The sequence is that of Acetyl-coenzyme A carboxylase carboxyl transferase subunit beta from Azorhizobium caulinodans (strain ATCC 43989 / DSM 5975 / JCM 20966 / LMG 6465 / NBRC 14845 / NCIMB 13405 / ORS 571).